A 292-amino-acid chain; its full sequence is tRNA pseudouridine synthase B (292 aa).

Asp38 serves as the catalytic Nucleophile.

Belongs to the pseudouridine synthase TruB family. Type 1 subfamily.

It catalyses the reaction uridine(55) in tRNA = pseudouridine(55) in tRNA. In terms of biological role, responsible for synthesis of pseudouridine from uracil-55 in the psi GC loop of transfer RNAs. In Streptococcus sanguinis (strain SK36), this protein is tRNA pseudouridine synthase B.